An 84-amino-acid polypeptide reads, in one-letter code: Cell division topological specificity factor (84 aa).

This sequence belongs to the MinE family.

Functionally, prevents the cell division inhibition by proteins MinC and MinD at internal division sites while permitting inhibition at polar sites. This ensures cell division at the proper site by restricting the formation of a division septum at the midpoint of the long axis of the cell. This Pseudomonas entomophila (strain L48) protein is Cell division topological specificity factor.